We begin with the raw amino-acid sequence, 259 residues long: NADP-dependent 3-hydroxy acid dehydrogenase (259 aa).

I11 is an NADP(+) binding site. Residue S42 is modified to Phosphoserine. At T43 the chain carries Phosphothreonine. NADP(+) contacts are provided by D65, N92, R126, Y158, K162, and V191. Y158 serves as the catalytic Proton acceptor. The Lowers pKa of active site Tyr role is filled by K162.

Belongs to the short-chain dehydrogenases/reductases (SDR) family. In terms of assembly, homotetramer.

It is found in the cytoplasm. It localises to the nucleus. It carries out the reaction L-allo-threonine + NADP(+) = aminoacetone + CO2 + NADPH. NADP-dependent dehydrogenase with broad substrate specificity acting on 3-hydroxy acids. Catalyzes the NADP-dependent oxidation of L-allo-threonine to L-2-amino-3-keto-butyrate, which is spontaneously decarboxylated into aminoacetone. Also acts on D-threonine, L-serine, D-serine, D-3-hydroxyisobutyrate, L-3-hydroxyisobutyrate, D-glycerate and L-glycerate. In Schizosaccharomyces pombe (strain 972 / ATCC 24843) (Fission yeast), this protein is NADP-dependent 3-hydroxy acid dehydrogenase.